The following is a 211-amino-acid chain: Octanoyltransferase (211 aa).

One can recognise a BPL/LPL catalytic domain in the interval 28–203 (GSAPETLLLV…HFQSLLKTWL (176 aa)). Substrate contacts are provided by residues 66–73 (RGGDITYH), 133–135 (SIG), and 146–148 (GFA). Catalysis depends on Cys164, which acts as the Acyl-thioester intermediate.

Belongs to the LipB family.

The protein resides in the cytoplasm. It catalyses the reaction octanoyl-[ACP] + L-lysyl-[protein] = N(6)-octanoyl-L-lysyl-[protein] + holo-[ACP] + H(+). Its pathway is protein modification; protein lipoylation via endogenous pathway; protein N(6)-(lipoyl)lysine from octanoyl-[acyl-carrier-protein]: step 1/2. Catalyzes the transfer of endogenously produced octanoic acid from octanoyl-acyl-carrier-protein onto the lipoyl domains of lipoate-dependent enzymes. Lipoyl-ACP can also act as a substrate although octanoyl-ACP is likely to be the physiological substrate. The sequence is that of Octanoyltransferase from Syntrophotalea carbinolica (strain DSM 2380 / NBRC 103641 / GraBd1) (Pelobacter carbinolicus).